We begin with the raw amino-acid sequence, 214 residues long: ATP phosphoribosyltransferase (214 aa).

It belongs to the ATP phosphoribosyltransferase family. Short subfamily. Heteromultimer composed of HisG and HisZ subunits.

Its subcellular location is the cytoplasm. It carries out the reaction 1-(5-phospho-beta-D-ribosyl)-ATP + diphosphate = 5-phospho-alpha-D-ribose 1-diphosphate + ATP. It functions in the pathway amino-acid biosynthesis; L-histidine biosynthesis; L-histidine from 5-phospho-alpha-D-ribose 1-diphosphate: step 1/9. Its function is as follows. Catalyzes the condensation of ATP and 5-phosphoribose 1-diphosphate to form N'-(5'-phosphoribosyl)-ATP (PR-ATP). Has a crucial role in the pathway because the rate of histidine biosynthesis seems to be controlled primarily by regulation of HisG enzymatic activity. In Halorhodospira halophila (strain DSM 244 / SL1) (Ectothiorhodospira halophila (strain DSM 244 / SL1)), this protein is ATP phosphoribosyltransferase.